Here is a 546-residue protein sequence, read N- to C-terminus: Plastidic glucose transporter 4 (546 aa).

12 helical membrane passes run 105–125, 148–168, 182–202, 205–225, 240–260, 265–285, 345–365, 381–401, 410–430, 441–461, 477–497, and 503–523; these read VLPF…HLGV, WIVS…GALA, IPLA…TMIV, LLAG…ISEI, LFIC…AANP, TMFG…AFSP, VVSV…NAVV, VAAS…ASSL, LLLT…LSFT, LAVV…GPVP, AVAL…LYFL, and FGIS…VLYI.

The protein belongs to the major facilitator superfamily. Sugar transporter (TC 2.A.1.1) family.

It localises to the plastid. It is found in the chloroplast inner membrane. May be involved in the efflux of glucose towards the cytosol. The sequence is that of Plastidic glucose transporter 4 from Arabidopsis thaliana (Mouse-ear cress).